Reading from the N-terminus, the 272-residue chain is Imidazole glycerol phosphate synthase subunit HisF (272 aa).

Catalysis depends on residues D11 and D130.

It belongs to the HisA/HisF family. In terms of assembly, heterodimer of HisH and HisF.

The protein resides in the cytoplasm. The enzyme catalyses 5-[(5-phospho-1-deoxy-D-ribulos-1-ylimino)methylamino]-1-(5-phospho-beta-D-ribosyl)imidazole-4-carboxamide + L-glutamine = D-erythro-1-(imidazol-4-yl)glycerol 3-phosphate + 5-amino-1-(5-phospho-beta-D-ribosyl)imidazole-4-carboxamide + L-glutamate + H(+). It participates in amino-acid biosynthesis; L-histidine biosynthesis; L-histidine from 5-phospho-alpha-D-ribose 1-diphosphate: step 5/9. In terms of biological role, IGPS catalyzes the conversion of PRFAR and glutamine to IGP, AICAR and glutamate. The HisF subunit catalyzes the cyclization activity that produces IGP and AICAR from PRFAR using the ammonia provided by the HisH subunit. The polypeptide is Imidazole glycerol phosphate synthase subunit HisF (Methanococcus maripaludis (strain C5 / ATCC BAA-1333)).